The sequence spans 382 residues: MEFEKLLRLMVEKGGSDLFITAGVPPSMKVNGRVMPVTKTPLSPEQTRETVLGVMNEQQRRDFAENHECNFAISARGIGRFRVSAFYQRNLVGMVLRRIETNIPTLEELKLPEILKKLALTKRGLVIFVGATGTGKSTSLAAMIGYRNKNSTGHIISIEDPIEYIHQHQGCIVTQREVGLDTDSFEVALKNTLRQAPDVIMIGEVRSRETMDHAVAFAETGHLCLATLHANNANQALERIIHFFPADRHGQVWMDLSLNLKAIVAQQLVPTPDGKGRRAVIEVLLNTPLAADLIRKGEVHELKPLMKRSTEQGMQTFDQALYQLYTQGEITYEDALAHADSANDLRLMIKLGSESDADHLSSLTQGLSLEITDDDPAGRRFR.

ATP is bound at residue 133 to 138 (GTGKST).

It belongs to the GSP E family. In terms of assembly, homohexamer. Interacts with PilT.

The protein resides in the cytoplasm. In terms of biological role, ATPase component of the type IV pilus (T4P) that plays a role in surface and host cell adhesion, colonization, biofilm maturation, virulence, and twitching, a form of surface-associated motility facilitated by cycles of extension, adhesion, and retraction of T4P fibers. Functions as a PilT-dependent retraction ATPase, providing a functional coupling between PilT and PilU and an optimal mechanism for pilus retraction. The polypeptide is Type IV pilus ATPase PilU (pilU) (Pseudomonas aeruginosa (strain ATCC 15692 / DSM 22644 / CIP 104116 / JCM 14847 / LMG 12228 / 1C / PRS 101 / PAO1)).